Consider the following 353-residue polypeptide: Dihydroorotate dehydrogenase (quinone) (353 aa).

Residues 67 to 71 (AGFDK) and T91 each bind FMN. Position 71 (K71) interacts with substrate. Position 116–120 (116–120 (NRMGF)) interacts with substrate. FMN is bound by residues N144 and N177. A substrate-binding site is contributed by N177. The active-site Nucleophile is S180. Residue N182 participates in substrate binding. K215 and T243 together coordinate FMN. 244-245 (NT) lines the substrate pocket. Residues G264, G293, and 314–315 (YT) contribute to the FMN site.

The protein belongs to the dihydroorotate dehydrogenase family. Type 2 subfamily. As to quaternary structure, monomer. FMN is required as a cofactor.

Its subcellular location is the cell membrane. It catalyses the reaction (S)-dihydroorotate + a quinone = orotate + a quinol. Its pathway is pyrimidine metabolism; UMP biosynthesis via de novo pathway; orotate from (S)-dihydroorotate (quinone route): step 1/1. Catalyzes the conversion of dihydroorotate to orotate with quinone as electron acceptor. This is Dihydroorotate dehydrogenase (quinone) from Gloeobacter violaceus (strain ATCC 29082 / PCC 7421).